The chain runs to 222 residues: Probable pyridoxal 5'-phosphate synthase subunit SNO2 (222 aa).

58–60 contributes to the L-glutamine binding site; it reads GES. The Nucleophile role is filled by Cys91. L-glutamine is bound by residues Arg120 and 151 to 152; that span reads IR. Residues His197 and Glu199 each act as charge relay system in the active site.

This sequence belongs to the glutaminase PdxT/SNO family.

The enzyme catalyses aldehydo-D-ribose 5-phosphate + D-glyceraldehyde 3-phosphate + L-glutamine = pyridoxal 5'-phosphate + L-glutamate + phosphate + 3 H2O + H(+). The catalysed reaction is L-glutamine + H2O = L-glutamate + NH4(+). It functions in the pathway cofactor biosynthesis; pyridoxal 5'-phosphate biosynthesis. Functionally, catalyzes the hydrolysis of glutamine to glutamate and ammonia as part of the biosynthesis of pyridoxal 5'-phosphate. The resulting ammonia molecule is channeled to the active site of a SNZ isoform. The polypeptide is Probable pyridoxal 5'-phosphate synthase subunit SNO2 (SNO2) (Saccharomyces cerevisiae (strain ATCC 204508 / S288c) (Baker's yeast)).